Reading from the N-terminus, the 110-residue chain is Large ribosomal subunit protein uL22 (110 aa).

Belongs to the universal ribosomal protein uL22 family. Part of the 50S ribosomal subunit.

Functionally, this protein binds specifically to 23S rRNA; its binding is stimulated by other ribosomal proteins, e.g. L4, L17, and L20. It is important during the early stages of 50S assembly. It makes multiple contacts with different domains of the 23S rRNA in the assembled 50S subunit and ribosome. Its function is as follows. The globular domain of the protein is located near the polypeptide exit tunnel on the outside of the subunit, while an extended beta-hairpin is found that lines the wall of the exit tunnel in the center of the 70S ribosome. This chain is Large ribosomal subunit protein uL22, found in Methylococcus capsulatus (strain ATCC 33009 / NCIMB 11132 / Bath).